We begin with the raw amino-acid sequence, 461 residues long: Type IV secretion system protein PtlD homolog (461 aa).

The N-terminal stretch at 1–24 (MAGLSRILLSCTLACLLAGQAAQA) is a signal peptide. A run of 5 helical transmembrane segments spans residues 118–138 (LQPL…YALL), 232–252 (WLLC…LAAS), 253–273 (LLIV…LFLV), 294–314 (ALVF…VLAG), and 333–353 (MLAA…VPLA). The segment covering 376–411 (AHRQAAARQYAPRPAAAAAAAGPHQAGTYAASATPA) has biased composition (low complexity). Residues 376 to 461 (AHRQAAARQY…RVLPRKPNLP (86 aa)) are disordered. Residues 439–453 (VRRDDRPAPAPDRRV) show a composition bias toward basic and acidic residues.

Its subcellular location is the cell membrane. The protein is Type IV secretion system protein PtlD homolog (ptlD) of Bordetella bronchiseptica (strain ATCC BAA-588 / NCTC 13252 / RB50) (Alcaligenes bronchisepticus).